Here is a 390-residue protein sequence, read N- to C-terminus: Lipid-A-disaccharide synthase (390 aa).

The protein belongs to the LpxB family.

It carries out the reaction a lipid X + a UDP-2-N,3-O-bis[(3R)-3-hydroxyacyl]-alpha-D-glucosamine = a lipid A disaccharide + UDP + H(+). The protein operates within bacterial outer membrane biogenesis; LPS lipid A biosynthesis. In terms of biological role, condensation of UDP-2,3-diacylglucosamine and 2,3-diacylglucosamine-1-phosphate to form lipid A disaccharide, a precursor of lipid A, a phosphorylated glycolipid that anchors the lipopolysaccharide to the outer membrane of the cell. In Haemophilus ducreyi (strain 35000HP / ATCC 700724), this protein is Lipid-A-disaccharide synthase.